The sequence spans 314 residues: R2-like ligand binding oxidase (314 aa).

Glu68, Glu101, and His104 together coordinate Mn(2+). Residues Val71–Tyr162 constitute a cross-link (3-(O4'-tyrosyl)-valine (Val-Tyr)). Glu101 serves as a coordination point for Fe cation. Residues Glu167, Glu202, and His205 each coordinate Fe cation.

The protein belongs to the ribonucleoside diphosphate reductase small chain family. R2-like ligand binding oxidase subfamily. In terms of assembly, homodimer. The cofactor is Fe cation. Mn(2+) serves as cofactor.

In terms of biological role, probable oxidase that might be involved in lipid metabolism. This is R2-like ligand binding oxidase from Mycobacterium bovis (strain ATCC BAA-935 / AF2122/97).